Reading from the N-terminus, the 325-residue chain is Alkanal monooxygenase beta chain (325 aa).

It belongs to the bacterial luciferase oxidoreductase family. In terms of assembly, heterodimer of an alpha and a beta chain.

The enzyme catalyses a long-chain fatty aldehyde + FMNH2 + O2 = a long-chain fatty acid + hnu + FMN + H2O + 2 H(+). Its function is as follows. Light-emitting reaction in luminous bacteria. The specific role of the beta subunit is unknown, but it is absolutely required for bioluminescence activity. The sequence is that of Alkanal monooxygenase beta chain (luxB) from Photobacterium leiognathi.